A 325-amino-acid chain; its full sequence is DNA repair and recombination protein RadA (325 aa).

ATP is bound at residue G107–T114.

Belongs to the eukaryotic RecA-like protein family.

Involved in DNA repair and in homologous recombination. Binds and assemble on single-stranded DNA to form a nucleoprotein filament. Hydrolyzes ATP in a ssDNA-dependent manner and promotes DNA strand exchange between homologous DNA molecules. The polypeptide is DNA repair and recombination protein RadA (Methanococcoides burtonii (strain DSM 6242 / NBRC 107633 / OCM 468 / ACE-M)).